Here is an 876-residue protein sequence, read N- to C-terminus: Alanine--tRNA ligase (876 aa).

Residue Lys-74 is modified to N6-acetyllysine. Zn(2+)-binding residues include His-564, His-568, Cys-666, and His-670.

Belongs to the class-II aminoacyl-tRNA synthetase family. As to quaternary structure, homotetramer. Requires Zn(2+) as cofactor.

The protein localises to the cytoplasm. The enzyme catalyses tRNA(Ala) + L-alanine + ATP = L-alanyl-tRNA(Ala) + AMP + diphosphate. Its function is as follows. Catalyzes the attachment of alanine to tRNA(Ala) in a two-step reaction: alanine is first activated by ATP to form Ala-AMP and then transferred to the acceptor end of tRNA(Ala). Also edits incorrectly charged Ser-tRNA(Ala) and Gly-tRNA(Ala) via its editing domain. The chain is Alanine--tRNA ligase from Shigella sonnei (strain Ss046).